We begin with the raw amino-acid sequence, 163 residues long: Pheromone-binding protein (163 aa).

The signal sequence occupies residues 1–22 (MMSVRLMLVVAVWLCLRVDASQ). Cystine bridges form between C39/C74, C70/C129, and C117/C138.

This sequence belongs to the PBP/GOBP family. As to expression, antenna.

Functionally, this major soluble protein in olfactory sensilla of male moths might serve to solubilize the extremely hydrophobic pheromone molecules and to transport pheromone through the aqueous lymph to receptors located on olfactory cilia. This chain is Pheromone-binding protein, found in Heliothis virescens (Tobacco budworm moth).